Reading from the N-terminus, the 203-residue chain is FMN-dependent NADH:quinone oxidoreductase 3 (203 aa).

Residues serine 9, 15-17, 95-98, and 139-142 contribute to the FMN site; these read SAS, MYNF, and TAGG.

It belongs to the azoreductase type 1 family. In terms of assembly, homodimer. It depends on FMN as a cofactor.

The enzyme catalyses 2 a quinone + NADH + H(+) = 2 a 1,4-benzosemiquinone + NAD(+). It carries out the reaction N,N-dimethyl-1,4-phenylenediamine + anthranilate + 2 NAD(+) = 2-(4-dimethylaminophenyl)diazenylbenzoate + 2 NADH + 2 H(+). In terms of biological role, quinone reductase that provides resistance to thiol-specific stress caused by electrophilic quinones. Also exhibits azoreductase activity. Catalyzes the reductive cleavage of the azo bond in aromatic azo compounds to the corresponding amines. The sequence is that of FMN-dependent NADH:quinone oxidoreductase 3 from Pseudomonas fluorescens (strain Pf0-1).